The chain runs to 195 residues: Myosin regulatory light chain, striated muscle, 25 kDa isoform (195 aa).

Over residues Ala-1 to Ala-17 the composition is skewed to basic and acidic residues. The disordered stretch occupies residues Ala-1–Ala-39. Positions Glu-20–Ala-39 are enriched in low complexity. EF-hand domains lie at Asn-55 to Glu-90 and Asp-124 to Gln-159. Ca(2+) contacts are provided by Asp-68, Asp-70, Asp-72, and Asp-79.

In terms of assembly, myosin is a hexamer of 2 heavy chains and 4 light chains.

Plays an important role in regulation of muscle cell contractile activity. This chain is Myosin regulatory light chain, striated muscle, 25 kDa isoform, found in Lumbricus terrestris (Common earthworm).